The sequence spans 247 residues: Cytochrome c oxidase subunit 2 (247 aa).

Residues 1–38 (MKEMMMSNMFNDVPTPWAMFFQDSATPNMEGMLELHNN) lie on the Mitochondrial intermembrane side of the membrane. A helical membrane pass occupies residues 39–58 (VVFYLCMMLGFVTFMLYNML). Over 59 to 78 (TTYNKSVMPYKYLNQGQFME) the chain is Mitochondrial matrix. Residues 79-103 (MMWTTLPAVMLLMIAFPSFILLYMC) traverse the membrane as a helical segment. Over 104–247 (DEVMAPAMTI…ADFLAWIDEQ (144 aa)) the chain is Mitochondrial intermembrane. His182, Cys217, Glu219, Cys221, His225, and Met228 together coordinate Cu cation. Mg(2+) is bound at residue Glu219.

Belongs to the cytochrome c oxidase subunit 2 family. In terms of assembly, component of the cytochrome c oxidase (complex IV, CIV), a multisubunit enzyme composed of a catalytic core of 3 subunits and several supernumerary subunits. The complex exists as a monomer or a dimer and forms supercomplexes (SCs) in the inner mitochondrial membrane with ubiquinol-cytochrome c oxidoreductase (cytochrome b-c1 complex, complex III, CIII). Cu cation serves as cofactor.

The protein resides in the mitochondrion inner membrane. The catalysed reaction is 4 Fe(II)-[cytochrome c] + O2 + 8 H(+)(in) = 4 Fe(III)-[cytochrome c] + 2 H2O + 4 H(+)(out). Component of the cytochrome c oxidase, the last enzyme in the mitochondrial electron transport chain which drives oxidative phosphorylation. The respiratory chain contains 3 multisubunit complexes succinate dehydrogenase (complex II, CII), ubiquinol-cytochrome c oxidoreductase (cytochrome b-c1 complex, complex III, CIII) and cytochrome c oxidase (complex IV, CIV), that cooperate to transfer electrons derived from NADH and succinate to molecular oxygen, creating an electrochemical gradient over the inner membrane that drives transmembrane transport and the ATP synthase. Cytochrome c oxidase is the component of the respiratory chain that catalyzes the reduction of oxygen to water. Electrons originating from reduced cytochrome c in the intermembrane space (IMS) are transferred via the dinuclear copper A center (CU(A)) of subunit 2 and heme A of subunit 1 to the active site in subunit 1, a binuclear center (BNC) formed by heme A3 and copper B (CU(B)). The BNC reduces molecular oxygen to 2 water molecules using 4 electrons from cytochrome c in the IMS and 4 protons from the mitochondrial matrix. The protein is Cytochrome c oxidase subunit 2 (COX2) of Brettanomyces custersianus (Yeast).